A 769-amino-acid polypeptide reads, in one-letter code: Acetyl-coenzyme A carboxylase carboxyl transferase subunit alpha, chloroplastic (769 aa).

The transit peptide at 1–54 directs the protein to the chloroplast; that stretch reads MASISHSSLALGGASSASASDYLRSSSNGVNGVPLKTLGRAVFTTIRRKDLAVT. In terms of domain architecture, CoA carboxyltransferase C-terminal spans 132–385; the sequence is LENKYRQALK…KIAINENMNE (254 aa). Coiled-coil stretches lie at residues 426 to 504 and 631 to 744; these read EAVF…ASSE and KQNQ…SDGS. A disordered region spans residues 718–769; the sequence is GLQEKQDELEKELAAARELAAEESDGSVKEDDDDDEDSSESGKSEMVNPSFA. Positions 721–732 are enriched in basic and acidic residues; the sequence is EKQDELEKELAA. Residues 738–756 are compositionally biased toward acidic residues; that stretch reads AEESDGSVKEDDDDDEDSS. The residue at position 741 (Ser-741) is a Phosphoserine.

The protein belongs to the AccA family. Acetyl-CoA carboxylase is a heterohexamer composed of biotin carboxyl carrier protein, biotin carboxylase and two subunits each of ACCase subunit alpha and ACCase plastid-coded subunit beta (accD). Accumulates in fatty acids synthesizing tissues such as embryos, expanding leaves, flower buds, flowers, and developing siliques.

The protein localises to the plastid. It is found in the chloroplast inner membrane. It carries out the reaction N(6)-carboxybiotinyl-L-lysyl-[protein] + acetyl-CoA = N(6)-biotinyl-L-lysyl-[protein] + malonyl-CoA. The protein operates within lipid metabolism; malonyl-CoA biosynthesis; malonyl-CoA from acetyl-CoA: step 1/1. In terms of biological role, component of the acetyl coenzyme A carboxylase (ACC) complex. First, biotin carboxylase catalyzes the carboxylation of biotin on its carrier protein (BCCP) and then the CO(2) group is transferred by the carboxyltransferase to acetyl-CoA to form malonyl-CoA. This chain is Acetyl-coenzyme A carboxylase carboxyl transferase subunit alpha, chloroplastic (CAC3), found in Arabidopsis thaliana (Mouse-ear cress).